Reading from the N-terminus, the 324-residue chain is Fructose-1,6-bisphosphatase class 1 (324 aa).

Residues glutamate 88, aspartate 107, leucine 109, and aspartate 110 each contribute to the Mg(2+) site. Substrate contacts are provided by residues 110–113 (DGSS), asparagine 199, and lysine 265. Residue glutamate 271 coordinates Mg(2+).

Belongs to the FBPase class 1 family. In terms of assembly, homotetramer. It depends on Mg(2+) as a cofactor.

It localises to the cytoplasm. It catalyses the reaction beta-D-fructose 1,6-bisphosphate + H2O = beta-D-fructose 6-phosphate + phosphate. Its pathway is carbohydrate biosynthesis; gluconeogenesis. The polypeptide is Fructose-1,6-bisphosphatase class 1 (Neisseria meningitidis serogroup C (strain 053442)).